Here is a 151-residue protein sequence, read N- to C-terminus: UPF0208 membrane protein YfbV (151 aa).

Residues methionine 1–arginine 45 lie on the Cytoplasmic side of the membrane. Residues tyrosine 46–leucine 65 traverse the membrane as a helical segment. The Periplasmic portion of the chain corresponds to glycine 66 to glutamine 68. A helical membrane pass occupies residues leucine 69–glycine 91. The Cytoplasmic portion of the chain corresponds to lysine 92–leucine 151.

It belongs to the UPF0208 family.

It localises to the cell inner membrane. The chain is UPF0208 membrane protein YfbV (yfbV) from Escherichia coli O6:H1 (strain CFT073 / ATCC 700928 / UPEC).